A 259-amino-acid polypeptide reads, in one-letter code: Indole-3-glycerol phosphate synthase (259 aa).

The protein belongs to the TrpC family.

It catalyses the reaction 1-(2-carboxyphenylamino)-1-deoxy-D-ribulose 5-phosphate + H(+) = (1S,2R)-1-C-(indol-3-yl)glycerol 3-phosphate + CO2 + H2O. It participates in amino-acid biosynthesis; L-tryptophan biosynthesis; L-tryptophan from chorismate: step 4/5. The sequence is that of Indole-3-glycerol phosphate synthase from Dehalococcoides mccartyi (strain ATCC BAA-2266 / KCTC 15142 / 195) (Dehalococcoides ethenogenes (strain 195)).